The chain runs to 189 residues: Movement protein (189 aa).

It belongs to the tombusvirus/aureusvirus movement protein p22 family. As to quaternary structure, interacts with host protein HFI22. Phosphorylated.

The protein resides in the host membrane. In terms of biological role, transports viral genome to neighboring plant cells directly through plasmosdesmata, without any budding. The movement protein allows efficient cell to cell propagation, by bypassing the host cell wall barrier. The sequence is that of Movement protein from Tomato bushy stunt virus (strain BS-3) (TBSV).